A 207-amino-acid polypeptide reads, in one-letter code: Holliday junction resolvase RecU (207 aa).

Residues 1–30 (MPIRYPNGQPYSRSPKQGQAKKPLPADTYS) are disordered. 4 residues coordinate Mg(2+): threonine 87, aspartate 89, glutamate 102, and glutamine 121.

Belongs to the RecU family. Requires Mg(2+) as cofactor.

It is found in the cytoplasm. The catalysed reaction is Endonucleolytic cleavage at a junction such as a reciprocal single-stranded crossover between two homologous DNA duplexes (Holliday junction).. In terms of biological role, endonuclease that resolves Holliday junction intermediates in genetic recombination. Cleaves mobile four-strand junctions by introducing symmetrical nicks in paired strands. Promotes annealing of linear ssDNA with homologous dsDNA. Required for DNA repair, homologous recombination and chromosome segregation. The sequence is that of Holliday junction resolvase RecU from Shouchella clausii (strain KSM-K16) (Alkalihalobacillus clausii).